We begin with the raw amino-acid sequence, 1285 residues long: DNA polymerase II large subunit (1285 aa).

Positions 565–586 (TRIGGRMGRPGKSKPREMRPPP) are disordered.

It belongs to the archaeal DNA polymerase II family. Heterodimer of a large subunit and a small subunit. In terms of processing, this protein undergoes a protein self splicing that involves a post-translational excision of the intervening region (intein) followed by peptide ligation.

The catalysed reaction is DNA(n) + a 2'-deoxyribonucleoside 5'-triphosphate = DNA(n+1) + diphosphate. It carries out the reaction Exonucleolytic cleavage in the 3'- to 5'-direction to yield nucleoside 5'-phosphates.. Functionally, possesses two activities: a DNA synthesis (polymerase) and an exonucleolytic activity that degrades single-stranded DNA in the 3'- to 5'-direction. Has a template-primer preference which is characteristic of a replicative DNA polymerase. The sequence is that of DNA polymerase II large subunit from Methanoculleus marisnigri (strain ATCC 35101 / DSM 1498 / JR1).